The following is a 320-amino-acid chain: Aminoacyl tRNA synthase complex-interacting multifunctional protein 2 (320 aa).

The tract at residues 31-52 is disordered; it reads HSKTTSPATDAGHVQETSEPSL. At serine 36 the chain carries Phosphoserine. Positions 82 to 162 are interaction with PRKN; that stretch reads TPDADLDVTN…HTHSSVKNVP (81 aa). Residues 162–225 form an interaction with TP53 region; sequence PENLLKCFGE…FLFSLFGQKH (64 aa). In terms of domain architecture, GST C-terminal spans 220 to 317; it reads LFGQKHSAVN…NLVPFSTALQ (98 aa).

As to quaternary structure, part of the multisynthetase complex (MSC), a multisubunit complex that groups tRNA ligases for Arg (RARS1), Asp (DARS1), Gln (QARS1), Ile (IARS1), Leu (LARS1), Lys (KARS1), Met (MARS1) the bifunctional ligase for Glu and Pro (EPRS1) and the auxiliary subunits AIMP1/p43, AIMP2/p38 and EEF1E1/p18. Interacts (via N-terminus) with KARS1. Interacts with EPRS1. Forms a linear complex that contains MARS1, EEF1E1, EPRS1 and AIMP2 that is at the core of the multisubunit complex. Binds FUBP1 (via C-terminus). Interacts in both its unphosphorylated and phosphorylated forms with p53/TP53 (via N-terminus) in the nucleus following UV irradiation. Interacts (via N-terminus) with PRKN/parkin (via first RING-type domain). Interacts with TARS3. In terms of processing, phosphorylated on serine residues in response to UV irradiation. Post-translationally, ubiquitinated by PRKN, leading to its degradation by the proteasome.

The protein resides in the cytoplasm. Its subcellular location is the cytosol. It is found in the nucleus. Required for assembly and stability of the aminoacyl-tRNA synthase complex. Mediates ubiquitination and degradation of FUBP1, a transcriptional activator of MYC, leading to MYC down-regulation which is required for aveolar type II cell differentiation. Blocks MDM2-mediated ubiquitination and degradation of p53/TP53. Functions as a proapoptotic factor. The sequence is that of Aminoacyl tRNA synthase complex-interacting multifunctional protein 2 (AIMP2) from Cricetulus griseus (Chinese hamster).